A 338-amino-acid chain; its full sequence is tRNA N6-adenosine threonylcarbamoyltransferase (338 aa).

Residues His111 and His115 each coordinate Fe cation. Residues 134–138 (LVSGG), Asp167, Gly180, and Asn272 each bind substrate. Asp300 serves as a coordination point for Fe cation.

The protein belongs to the KAE1 / TsaD family. Requires Fe(2+) as cofactor.

The protein resides in the cytoplasm. It carries out the reaction L-threonylcarbamoyladenylate + adenosine(37) in tRNA = N(6)-L-threonylcarbamoyladenosine(37) in tRNA + AMP + H(+). Its function is as follows. Required for the formation of a threonylcarbamoyl group on adenosine at position 37 (t(6)A37) in tRNAs that read codons beginning with adenine. Is involved in the transfer of the threonylcarbamoyl moiety of threonylcarbamoyl-AMP (TC-AMP) to the N6 group of A37, together with TsaE and TsaB. TsaD likely plays a direct catalytic role in this reaction. This Shewanella oneidensis (strain ATCC 700550 / JCM 31522 / CIP 106686 / LMG 19005 / NCIMB 14063 / MR-1) protein is tRNA N6-adenosine threonylcarbamoyltransferase.